Here is a 111-residue protein sequence, read N- to C-terminus: Prostatic steroid-binding protein C1 (111 aa).

The signal sequence occupies residues 1–23 (MSTIKLSLCLLIMLAVCCYEANA).

The protein belongs to the secretoglobin family. Lipophilin subfamily. In terms of assembly, prostatein is composed of three different peptides called C1, C2 and C3. These form covalent C1:C3 (F) and C2:C3 (S) heterodimers whose noncovalent association forms tetrameric (C1:C3/C3:C2) prostatein molecules.

It is found in the secreted. Functionally, part of prostatein which is the major secretory glycoprotein of ventral prostate gland. The polypeptide is Prostatic steroid-binding protein C1 (Psbpc1) (Rattus norvegicus (Rat)).